The primary structure comprises 218 residues: NAD(P)H-quinone oxidoreductase subunit I (218 aa).

2 consecutive 4Fe-4S ferredoxin-type domains span residues 55 to 84 (GRIH…VDWV) and 95 to 124 (RNYS…MTEE). [4Fe-4S] cluster contacts are provided by C64, C67, C70, C74, C104, C107, C110, and C114. The disordered stretch occupies residues 169 to 218 (MDPHDVPANQPRAGQLPAEALKSLSLQQESVQGDEGESLQDASDQDQPSG). Positions 208-218 (QDASDQDQPSG) are enriched in polar residues.

The protein belongs to the complex I 23 kDa subunit family. As to quaternary structure, NDH-1 is composed of at least 11 different subunits. It depends on [4Fe-4S] cluster as a cofactor.

Its subcellular location is the cellular thylakoid membrane. It catalyses the reaction a plastoquinone + NADH + (n+1) H(+)(in) = a plastoquinol + NAD(+) + n H(+)(out). It carries out the reaction a plastoquinone + NADPH + (n+1) H(+)(in) = a plastoquinol + NADP(+) + n H(+)(out). Its function is as follows. NDH-1 shuttles electrons from an unknown electron donor, via FMN and iron-sulfur (Fe-S) centers, to quinones in the respiratory and/or the photosynthetic chain. The immediate electron acceptor for the enzyme in this species is believed to be plastoquinone. Couples the redox reaction to proton translocation, and thus conserves the redox energy in a proton gradient. This is NAD(P)H-quinone oxidoreductase subunit I from Prochlorococcus marinus (strain MIT 9313).